The sequence spans 236 residues: tRNA (guanine-N(7)-)-methyltransferase (236 aa).

Aspartate 35, glutamate 60, asparagine 87, and aspartate 113 together coordinate S-adenosyl-L-methionine. Residue aspartate 113 is part of the active site. Substrate-binding residues include lysine 117 and aspartate 149.

The protein belongs to the class I-like SAM-binding methyltransferase superfamily. TrmB family.

It catalyses the reaction guanosine(46) in tRNA + S-adenosyl-L-methionine = N(7)-methylguanosine(46) in tRNA + S-adenosyl-L-homocysteine. It participates in tRNA modification; N(7)-methylguanine-tRNA biosynthesis. Functionally, catalyzes the formation of N(7)-methylguanine at position 46 (m7G46) in tRNA. This is tRNA (guanine-N(7)-)-methyltransferase from Parasynechococcus marenigrum (strain WH8102).